The following is a 188-amino-acid chain: SRP-independent targeting protein 3 (188 aa).

A helical transmembrane segment spans residues 27-47; that stretch reads TIIMYIRILYCSSIGISWIIY. Ser-157 is modified (phosphoserine). The segment at 157–188 is disordered; that stretch reads SLFGGMGQTGPKTDKKSIEEAERAGNAGVKAE. Residues 168 to 179 are compositionally biased toward basic and acidic residues; the sequence is KTDKKSIEEAER.

Belongs to the PHO88 family. In terms of assembly, interacts with ENV10/SND2. ENV10/SND2 and PHO88/SND3 form a complex with the translocon in the endoplasmic reticulum membrane.

It is found in the endoplasmic reticulum membrane. It localises to the mitochondrion. Functions in the SND pathway, a SRP (signal recognition particle) and GET (guided entry of tail-anchored proteins) independent pathway for targeting a broad range of substrate proteins to the endoplasmic reticulum. SND functions in parallel to GET in targeting proteins with downstream hydrophobic motifs. Involved in inorganic phosphate uptake. Also involved in telomere length regulation and maintenance. This Saccharomyces cerevisiae (strain ATCC 204508 / S288c) (Baker's yeast) protein is SRP-independent targeting protein 3.